A 444-amino-acid chain; its full sequence is Beta-D-glucosyl crocetin beta-1,6-glucosyltransferase (444 aa).

The Proton acceptor role is filled by histidine 9. Histidine 9 contributes to the an anthocyanidin binding site. Residue aspartate 108 is the Charge relay of the active site. Residues threonine 130, alanine 319, glutamine 321, histidine 336, tryptophan 339, asparagine 340, serine 341, glutamate 344, aspartate 360, and glutamine 361 each contribute to the UDP-alpha-D-glucose site.

Belongs to the UDP-glycosyltransferase family. In terms of tissue distribution, ubiquitous.

The catalysed reaction is beta-D-glucosyl crocetin + UDP-alpha-D-glucose = beta-D-gentiobiosyl crocetin + UDP + H(+). It carries out the reaction bis(beta-D-glucosyl) crocetin + UDP-alpha-D-glucose = beta-D-gentiobiosyl beta-D-glucosyl crocetin + UDP + H(+). The enzyme catalyses beta-D-gentiobiosyl beta-D-glucosyl crocetin + UDP-alpha-D-glucose = bis(beta-D-gentiobiosyl) crocetin + UDP + H(+). Glucosyltransferase catalyzing the beta 1-6 glucosylation of the sugar moiety of crocetin glucosyl esters to produce crocetin gentiobiosyl esters. Weak activity toward curcumin glucosides, but no activity with flavonoid glucosides, coumarin glucosides, 4-nitrophenyl glucoside or crocetin. Involved with UGT75L6 in sequential glycosylation of crocetin to crocin (bis(beta-D-gentiobiosyl) crocetin). This Gardenia jasminoides (Cape jasmine) protein is Beta-D-glucosyl crocetin beta-1,6-glucosyltransferase (UGT94E5).